Here is a 346-residue protein sequence, read N- to C-terminus: MDFLSKHTTCLSNLELNLAPGWQTVSAYFLLAAGSLFVASRALTFVRVLLSLFVLPGKSLRSFGPKGSWAVVTGASDGLGKEFSLQLARAGFNIVLVSRTASKLTTLSDEITSKYASVQTKTLAMDFARNEDSDYEKLKALVDELDVAILVNNVGKSHDIPTPFALTSQEEMTDIITINCMGTLRATQLIVPGMMQRKRGLILTMGSFGGLLPTPLLATYSGSKAFLQQWSTALGSELEEHGITVELVQAYLITSAMSKIRRASATIPDPRSFVKSVLSKIGRNGGSPSYAYSSSPYWSHGLMAYFLTCIAGTMGKFVTSKNRGMHESIRKRALRKAEREKAKKST.

The helical transmembrane segment at 26–46 (SAYFLLAAGSLFVASRALTFV) threads the bilayer. NADP(+) is bound by residues Val-71, Asp-126, Asp-134, Asn-153, Tyr-220, Lys-224, Ile-253, and Ser-255. Tyr-220 serves as the catalytic Proton donor. Residue Lys-224 is the Lowers pKa of active site Tyr of the active site.

Belongs to the short-chain dehydrogenases/reductases (SDR) family.

The protein localises to the endoplasmic reticulum membrane. The enzyme catalyses a very-long-chain (3R)-3-hydroxyacyl-CoA + NADP(+) = a very-long-chain 3-oxoacyl-CoA + NADPH + H(+). The protein operates within lipid metabolism; fatty acid biosynthesis. Component of the microsomal membrane bound fatty acid elongation system, which produces the 26-carbon very long-chain fatty acids (VLCFA) from palmitate. Catalyzes the reduction of the 3-ketoacyl-CoA intermediate that is formed in each cycle of fatty acid elongation. VLCFAs serve as precursors for ceramide and sphingolipids. In Aspergillus oryzae (strain ATCC 42149 / RIB 40) (Yellow koji mold), this protein is Very-long-chain 3-oxoacyl-CoA reductase.